We begin with the raw amino-acid sequence, 548 residues long: Tylosin resistance ATP-binding protein TlrC (548 aa).

ABC transporter domains follow at residues Leu-9 to Gln-265 and Ile-347 to Ala-547. ATP is bound by residues Gly-41 to Ser-48 and Gly-387 to Ser-394.

It belongs to the ABC transporter superfamily.

Its subcellular location is the cell membrane. Responsible for tylosin resistance, and is proposed to be a subunit of a multicomponent export system for the energy-dependent efflux of tylosin. The protein is Tylosin resistance ATP-binding protein TlrC (tlrC) of Streptomyces fradiae (Streptomyces roseoflavus).